A 215-amino-acid polypeptide reads, in one-letter code: Cytochrome b6 (215 aa).

The helical transmembrane segment at 32-52 (IFYCLGGITLTCFLVQVATGF) threads the bilayer. C35 serves as a coordination point for heme c. Heme b is bound by residues H86 and H100. The next 3 helical transmembrane spans lie at 90–110 (ASMM…TGGF), 116–136 (LTWV…VTGY), and 186–206 (LHTF…FLMI). 2 residues coordinate heme b: H187 and H202.

The protein belongs to the cytochrome b family. PetB subfamily. The 4 large subunits of the cytochrome b6-f complex are cytochrome b6, subunit IV (17 kDa polypeptide, PetD), cytochrome f and the Rieske protein, while the 4 small subunits are PetG, PetL, PetM and PetN. The complex functions as a dimer. Heme b serves as cofactor. Heme c is required as a cofactor.

It localises to the plastid. The protein resides in the chloroplast thylakoid membrane. Component of the cytochrome b6-f complex, which mediates electron transfer between photosystem II (PSII) and photosystem I (PSI), cyclic electron flow around PSI, and state transitions. This chain is Cytochrome b6, found in Morus indica (Mulberry).